Consider the following 293-residue polypeptide: Probable endonuclease 4 (293 aa).

The Zn(2+) site is built by His-78, His-118, Glu-154, Asp-188, His-191, His-225, Asp-238, His-240, and Glu-270.

Belongs to the AP endonuclease 2 family. The cofactor is Zn(2+).

The enzyme catalyses Endonucleolytic cleavage to 5'-phosphooligonucleotide end-products.. In terms of biological role, endonuclease IV plays a role in DNA repair. It cleaves phosphodiester bonds at apurinic or apyrimidinic (AP) sites, generating a 3'-hydroxyl group and a 5'-terminal sugar phosphate. This chain is Probable endonuclease 4, found in Vibrio vulnificus (strain YJ016).